Consider the following 260-residue polypeptide: UPF0246 protein APL_0602 (260 aa).

It belongs to the UPF0246 family.

In Actinobacillus pleuropneumoniae serotype 5b (strain L20), this protein is UPF0246 protein APL_0602.